The primary structure comprises 768 residues: Phosphoribosylformylglycinamidine synthase subunit PurL (768 aa).

Residue His44 is part of the active site. The ATP site is built by Tyr47 and Lys86. Residue Glu88 coordinates Mg(2+). Substrate contacts are provided by residues 89 to 92 (SHNH) and Arg111. Residue His90 is the Proton acceptor of the active site. Asp112 is a binding site for Mg(2+). Residue Gln235 participates in substrate binding. Residue Asp263 coordinates Mg(2+). A substrate-binding site is contributed by 307–309 (ESQ). Asp518 and Gly555 together coordinate ATP. Residue Asn556 coordinates Mg(2+). Residue Ser558 participates in substrate binding.

Belongs to the FGAMS family. In terms of assembly, monomer. Part of the FGAM synthase complex composed of 1 PurL, 1 PurQ and 2 PurS subunits.

It is found in the cytoplasm. The catalysed reaction is N(2)-formyl-N(1)-(5-phospho-beta-D-ribosyl)glycinamide + L-glutamine + ATP + H2O = 2-formamido-N(1)-(5-O-phospho-beta-D-ribosyl)acetamidine + L-glutamate + ADP + phosphate + H(+). The protein operates within purine metabolism; IMP biosynthesis via de novo pathway; 5-amino-1-(5-phospho-D-ribosyl)imidazole from N(2)-formyl-N(1)-(5-phospho-D-ribosyl)glycinamide: step 1/2. Its function is as follows. Part of the phosphoribosylformylglycinamidine synthase complex involved in the purines biosynthetic pathway. Catalyzes the ATP-dependent conversion of formylglycinamide ribonucleotide (FGAR) and glutamine to yield formylglycinamidine ribonucleotide (FGAM) and glutamate. The FGAM synthase complex is composed of three subunits. PurQ produces an ammonia molecule by converting glutamine to glutamate. PurL transfers the ammonia molecule to FGAR to form FGAM in an ATP-dependent manner. PurS interacts with PurQ and PurL and is thought to assist in the transfer of the ammonia molecule from PurQ to PurL. This is Phosphoribosylformylglycinamidine synthase subunit PurL from Synechococcus sp. (strain JA-2-3B'a(2-13)) (Cyanobacteria bacterium Yellowstone B-Prime).